We begin with the raw amino-acid sequence, 148 residues long: Lysozyme-like protein 6 (148 aa).

An N-terminal signal peptide occupies residues 1 to 19; it reads MTSPLLISLASCLVAVNQA. Residues 20-148 enclose the C-type lysozyme domain; the sequence is SLIGRCDLAK…SYWMTGCHLA (129 aa). Disulfide bonds link C25-C145, C49-C133, C83-C98, and C94-C112. Catalysis depends on residues E54 and D71.

It belongs to the glycosyl hydrolase 22 family. As to quaternary structure, monomer.

It is found in the secreted. The protein localises to the cell surface. Its subcellular location is the cell projection. The protein resides in the cilium. It localises to the flagellum. The catalysed reaction is Hydrolysis of (1-&gt;4)-beta-linkages between N-acetylmuramic acid and N-acetyl-D-glucosamine residues in a peptidoglycan and between N-acetyl-D-glucosamine residues in chitodextrins.. Its function is as follows. May be involved sperm-egg plasma membrane adhesion and fusion during fertilization. Exhibits bacteriolytic activity in vitro against Micrococcus luteus and Staphylococcus aureus. Shows weak bacteriolytic activity against Gram-positive bacteria at physiological pH. Bacteriolytic activity is pH-dependent, with a maximum at around pH 5.6. The protein is Lysozyme-like protein 6 (LYZL6) of Bos taurus (Bovine).